A 55-amino-acid chain; its full sequence is Large ribosomal subunit protein bL32 (55 aa).

The span at 1–19 (MAVPKFKKSRANTRARRSQ) shows a compositional bias: basic residues. The tract at residues 1 to 22 (MAVPKFKKSRANTRARRSQWKA) is disordered.

Belongs to the bacterial ribosomal protein bL32 family.

This is Large ribosomal subunit protein bL32 from Corynebacterium urealyticum (strain ATCC 43042 / DSM 7109).